The chain runs to 429 residues: 3-isopropylmalate dehydratase large subunit (429 aa).

The [4Fe-4S] cluster site is built by Cys303, Cys363, and Cys366.

Belongs to the aconitase/IPM isomerase family. LeuC type 2 subfamily. Heterodimer of LeuC and LeuD. [4Fe-4S] cluster serves as cofactor.

The catalysed reaction is (2R,3S)-3-isopropylmalate = (2S)-2-isopropylmalate. The protein operates within amino-acid biosynthesis; L-leucine biosynthesis; L-leucine from 3-methyl-2-oxobutanoate: step 2/4. Functionally, catalyzes the isomerization between 2-isopropylmalate and 3-isopropylmalate, via the formation of 2-isopropylmaleate. The protein is 3-isopropylmalate dehydratase large subunit of Caldicellulosiruptor saccharolyticus (strain ATCC 43494 / DSM 8903 / Tp8T 6331).